The chain runs to 279 residues: MLTDGSYFHLHLVSDSTGETLITVSRAVAAQYANVNAVEHVYPLVRSQKQLDRVLQEIEESPGIVLFTLLEGELVARLEAKCQEINSPSLSIIGPVMQLFEAYLGASTTGRVGAQHTLNAEYFKRIDALNYSMMHDDGQHVEGLEEADVVLVGVSRTSKTPTSIYLANRGIRTANVPLVAGIPIPHQLETLKKPLVVSLHASPERLIQVRQNRLLSLGAGAGNDSYIDRQSVTDEVLLARKLSAKYGWSLLDVTRRSIEETAAAIMKLLADRQRQRMSE.

153-160 (GVSRTSKT) provides a ligand contact to ADP.

It belongs to the pyruvate, phosphate/water dikinase regulatory protein family. PDRP subfamily.

The catalysed reaction is N(tele)-phospho-L-histidyl/L-threonyl-[pyruvate, phosphate dikinase] + ADP = N(tele)-phospho-L-histidyl/O-phospho-L-threonyl-[pyruvate, phosphate dikinase] + AMP + H(+). The enzyme catalyses N(tele)-phospho-L-histidyl/O-phospho-L-threonyl-[pyruvate, phosphate dikinase] + phosphate + H(+) = N(tele)-phospho-L-histidyl/L-threonyl-[pyruvate, phosphate dikinase] + diphosphate. Bifunctional serine/threonine kinase and phosphorylase involved in the regulation of the pyruvate, phosphate dikinase (PPDK) by catalyzing its phosphorylation/dephosphorylation. The chain is Putative pyruvate, phosphate dikinase regulatory protein from Rhodopseudomonas palustris (strain HaA2).